The chain runs to 238 residues: U2 small nuclear ribonucleoprotein A' (238 aa).

LRR repeat units lie at residues 19–40, 42–63, 64–84, and 89–110; these read KQVT…GITK, TYEV…PRLK, NLKV…DKLP, and HLQS…RILC. Positions 123–161 constitute an LRRCT domain; sequence NPITDSPNYRYFIVWLIPTLKVLDFSKVKQKELVKAKEL.

This sequence belongs to the U2 small nuclear ribonucleoprotein A family. As to quaternary structure, associated with the spliceosome.

The protein resides in the nucleus. Involved in pre-mRNA splicing. The chain is U2 small nuclear ribonucleoprotein A' (LEA1) from Debaryomyces hansenii (strain ATCC 36239 / CBS 767 / BCRC 21394 / JCM 1990 / NBRC 0083 / IGC 2968) (Yeast).